Consider the following 245-residue polypeptide: 3-deoxy-manno-octulosonate cytidylyltransferase (245 aa).

The protein belongs to the KdsB family.

The protein localises to the cytoplasm. The catalysed reaction is 3-deoxy-alpha-D-manno-oct-2-ulosonate + CTP = CMP-3-deoxy-beta-D-manno-octulosonate + diphosphate. Its pathway is nucleotide-sugar biosynthesis; CMP-3-deoxy-D-manno-octulosonate biosynthesis; CMP-3-deoxy-D-manno-octulosonate from 3-deoxy-D-manno-octulosonate and CTP: step 1/1. The protein operates within bacterial outer membrane biogenesis; lipopolysaccharide biosynthesis. In terms of biological role, activates KDO (a required 8-carbon sugar) for incorporation into bacterial lipopolysaccharide in Gram-negative bacteria. The protein is 3-deoxy-manno-octulosonate cytidylyltransferase of Desulfatibacillum aliphaticivorans.